A 208-amino-acid polypeptide reads, in one-letter code: Putative vomeronasal receptor-like protein 4 (208 aa).

Residues 1-19 (MEMTKLFSYIVIKNVYYPQ) lie on the Extracellular side of the membrane. A helical transmembrane segment spans residues 20 to 40 (VSFGISANTFLLLFHIFTFAY). The Cytoplasmic portion of the chain corresponds to 41–48 (THRLKPID). The chain crosses the membrane as a helical span at residues 49–69 (MTISHLPLIHILLLFTQAILV). At 70–97 (SSDLFESWNIQNNDLKCKIITFLNRVMR) the chain is on the extracellular side. Cysteines 86 and 173 form a disulfide. A helical transmembrane segment spans residues 98-118 (GVSICTTCLLSVLQAITISPS). Residues 119 to 135 (TSFLEKFKHISANHTLG) lie on the Cytoplasmic side of the membrane. Residues 136–156 (FILFSWVLNMFITNNLLLFIV) traverse the membrane as a helical segment. The Extracellular segment spans residues 157-183 (PTPNRIGASLLFVTEHCYVLPMSYTHR). Residues 184-204 (SLFFILMVLRDVIFIGLMVLS) traverse the membrane as a helical segment. Topologically, residues 205–208 (SGYG) are cytoplasmic.

It belongs to the G-protein coupled receptor 1 family. As to expression, expressed in olfactory nerve.

The protein resides in the cell membrane. Its function is as follows. Putative pheromone receptor. The chain is Putative vomeronasal receptor-like protein 4 (VN1R17P) from Homo sapiens (Human).